The chain runs to 644 residues: Exoribonuclease 2 (644 aa).

Positions 189–516 (RQDLTALNFV…NHRLLKAAIK (328 aa)) constitute an RNB domain. Residues 561 to 643 (DTRFAAEIID…ETRSIIARPV (83 aa)) form the S1 motif domain.

It belongs to the RNR ribonuclease family. RNase II subfamily.

It localises to the cytoplasm. It carries out the reaction Exonucleolytic cleavage in the 3'- to 5'-direction to yield nucleoside 5'-phosphates.. Its function is as follows. Involved in mRNA degradation. Hydrolyzes single-stranded polyribonucleotides processively in the 3' to 5' direction. In Escherichia fergusonii (strain ATCC 35469 / DSM 13698 / CCUG 18766 / IAM 14443 / JCM 21226 / LMG 7866 / NBRC 102419 / NCTC 12128 / CDC 0568-73), this protein is Exoribonuclease 2.